Here is a 141-residue protein sequence, read N- to C-terminus: VLSPADKTNVKAAWDKVGGNAGEYGAEALERMFLSFPTTKTYFPHFDLAHGSPQVKGHGKKVGDALTNAVSHIDDLPGALSALSDLHAYKLRVDPVNFKLLSHCLLVTLANHLPSDFTPAVHASLDKFLASVSTVLTSKYR.

The Globin domain occupies 1 to 141 (VLSPADKTNV…VSTVLTSKYR (141 aa)). Residue Ser-3 is modified to Phosphoserine. Lys-7 carries the N6-succinyllysine modification. Position 8 is a phosphothreonine (Thr-8). The residue at position 11 (Lys-11) is an N6-succinyllysine. N6-acetyllysine; alternate is present on Lys-16. Lys-16 is modified (N6-succinyllysine; alternate). Tyr-24 is subject to Phosphotyrosine. Ser-35 carries the post-translational modification Phosphoserine. The residue at position 40 (Lys-40) is an N6-succinyllysine. His-58 contributes to the O2 binding site. His-87 is a binding site for heme b. Position 102 is a phosphoserine (Ser-102). The residue at position 108 (Thr-108) is a Phosphothreonine. Residues Ser-124 and Ser-131 each carry the phosphoserine modification. Thr-134 and Thr-137 each carry phosphothreonine. At Ser-138 the chain carries Phosphoserine.

The protein belongs to the globin family. In terms of assembly, heterotetramer of two alpha chains and two beta chains. Red blood cells.

Functionally, involved in oxygen transport from the lung to the various peripheral tissues. Its function is as follows. Hemopressin acts as an antagonist peptide of the cannabinoid receptor CNR1. Hemopressin-binding efficiently blocks cannabinoid receptor CNR1 and subsequent signaling. This is Hemoglobin subunit alpha (HBA) from Cynopterus sphinx (Indian short-nosed fruit bat).